The following is a 38-amino-acid chain: Anthranilate phosphoribosyltransferase (38 aa).

This sequence belongs to the anthranilate phosphoribosyltransferase family. In terms of assembly, homodimer.

The enzyme catalyses N-(5-phospho-beta-D-ribosyl)anthranilate + diphosphate = 5-phospho-alpha-D-ribose 1-diphosphate + anthranilate. The protein operates within amino-acid biosynthesis; L-tryptophan biosynthesis; L-tryptophan from chorismate: step 2/5. Functionally, catalyzes the transfer of the phosphoribosyl group of 5-phosphorylribose-1-pyrophosphate (PRPP) to anthranilate to yield N-(5'-phosphoribosyl)-anthranilate (PRA). This is Anthranilate phosphoribosyltransferase (trpD) from Serratia marcescens.